The sequence spans 127 residues: Small ribosomal subunit protein uS11 (127 aa).

The protein belongs to the universal ribosomal protein uS11 family. Part of the 30S ribosomal subunit. Interacts with proteins S7 and S18. Binds to IF-3.

Located on the platform of the 30S subunit, it bridges several disparate RNA helices of the 16S rRNA. Forms part of the Shine-Dalgarno cleft in the 70S ribosome. The chain is Small ribosomal subunit protein uS11 from Rickettsia felis (strain ATCC VR-1525 / URRWXCal2) (Rickettsia azadi).